The sequence spans 408 residues: Histidine--tRNA ligase (408 aa).

This sequence belongs to the class-II aminoacyl-tRNA synthetase family. As to quaternary structure, homodimer.

The protein localises to the cytoplasm. The enzyme catalyses tRNA(His) + L-histidine + ATP = L-histidyl-tRNA(His) + AMP + diphosphate + H(+). The polypeptide is Histidine--tRNA ligase (Campylobacter lari (strain RM2100 / D67 / ATCC BAA-1060)).